The following is a 117-amino-acid chain: Ig kappa chain V region 12F2 (117 aa).

Positions 1-6 (LPGARC) are cleaved as a signal peptide. The segment at 7-29 (AYDMTQTPASVEVAVGGTVTIKC) is framework-1. Cysteine 29 and cysteine 86 form a disulfide bridge. The interval 30–40 (QASQSISTYLS) is complementarity-determining-1. The interval 41-55 (WYQQKPGQRPKLLIY) is framework-2. Positions 56–62 (RASTLAS) are complementarity-determining-2. The tract at residues 63 to 94 (GVSSRFKGSGSGTEFTLTISGVECADAATYYC) is framework-3. The tract at residues 95–106 (QQGWSSSNVENV) is complementarity-determining-3. Residues 107–116 (FGGGTEVVVK) are framework-4.

This chain is Ig kappa chain V region 12F2, found in Oryctolagus cuniculus (Rabbit).